Here is a 215-residue protein sequence, read N- to C-terminus: Adenylate kinase (215 aa).

Residue 10–15 (GAGKGT) participates in ATP binding. The interval 30-59 (STGDIFRKNISENTPLGMEARSYMDKGLLV) is NMP. AMP contacts are provided by residues Thr-31, Arg-36, 57–59 (LLV), 85–88 (GFPR), and Gln-92. Residues 126–163 (GRRVCTSCGGSFHIKFNPPTIDGKCNLCGSDIVQRKDD) are LID. ATP is bound at residue Arg-127. 2 residues coordinate Zn(2+): Cys-130 and Cys-133. 136 to 137 (SF) is a binding site for ATP. Residues Cys-150 and Cys-153 each coordinate Zn(2+). AMP contacts are provided by Arg-160 and Arg-171. Lys-199 is a binding site for ATP.

It belongs to the adenylate kinase family. Monomer.

It localises to the cytoplasm. It catalyses the reaction AMP + ATP = 2 ADP. It participates in purine metabolism; AMP biosynthesis via salvage pathway; AMP from ADP: step 1/1. Catalyzes the reversible transfer of the terminal phosphate group between ATP and AMP. Plays an important role in cellular energy homeostasis and in adenine nucleotide metabolism. This Clostridium botulinum (strain Eklund 17B / Type B) protein is Adenylate kinase.